Reading from the N-terminus, the 48-residue chain is Large ribosomal subunit protein bL34c (48 aa).

Positions 18-48 are disordered; sequence SGFRSRMATPQGRKTIRNRRKKGRKNLTLRR. A compositionally biased stretch (basic residues) spans 31–48; that stretch reads KTIRNRRKKGRKNLTLRR.

This sequence belongs to the bacterial ribosomal protein bL34 family.

The protein resides in the plastid. The protein localises to the chloroplast. The polypeptide is Large ribosomal subunit protein bL34c (Phaeodactylum tricornutum (strain CCAP 1055/1)).